We begin with the raw amino-acid sequence, 396 residues long: Tryptophan synthase beta chain (396 aa).

At K88 the chain carries N6-(pyridoxal phosphate)lysine.

It belongs to the TrpB family. As to quaternary structure, tetramer of two alpha and two beta chains. Pyridoxal 5'-phosphate is required as a cofactor.

The enzyme catalyses (1S,2R)-1-C-(indol-3-yl)glycerol 3-phosphate + L-serine = D-glyceraldehyde 3-phosphate + L-tryptophan + H2O. The protein operates within amino-acid biosynthesis; L-tryptophan biosynthesis; L-tryptophan from chorismate: step 5/5. The beta subunit is responsible for the synthesis of L-tryptophan from indole and L-serine. The protein is Tryptophan synthase beta chain of Shewanella sp. (strain W3-18-1).